We begin with the raw amino-acid sequence, 559 residues long: Formate--tetrahydrofolate ligase (559 aa).

An ATP-binding site is contributed by 68 to 75 (TPAGEGKT).

The protein belongs to the formate--tetrahydrofolate ligase family.

The enzyme catalyses (6S)-5,6,7,8-tetrahydrofolate + formate + ATP = (6R)-10-formyltetrahydrofolate + ADP + phosphate. The protein operates within one-carbon metabolism; tetrahydrofolate interconversion. The polypeptide is Formate--tetrahydrofolate ligase (Mesorhizobium japonicum (strain LMG 29417 / CECT 9101 / MAFF 303099) (Mesorhizobium loti (strain MAFF 303099))).